A 79-amino-acid chain; its full sequence is Putative membrane protein insertion efficiency factor (79 aa).

It belongs to the UPF0161 family.

Its subcellular location is the cell inner membrane. Its function is as follows. Could be involved in insertion of integral membrane proteins into the membrane. The sequence is that of Putative membrane protein insertion efficiency factor from Thermotoga neapolitana (strain ATCC 49049 / DSM 4359 / NBRC 107923 / NS-E).